The chain runs to 296 residues: 4-hydroxy-tetrahydrodipicolinate synthase (296 aa).

Thr-49 contributes to the pyruvate binding site. The active-site Proton donor/acceptor is the Tyr-137. Residue Lys-166 is the Schiff-base intermediate with substrate of the active site. Ile-208 contacts pyruvate.

This sequence belongs to the DapA family. Homotetramer; dimer of dimers.

Its subcellular location is the cytoplasm. The enzyme catalyses L-aspartate 4-semialdehyde + pyruvate = (2S,4S)-4-hydroxy-2,3,4,5-tetrahydrodipicolinate + H2O + H(+). It functions in the pathway amino-acid biosynthesis; L-lysine biosynthesis via DAP pathway; (S)-tetrahydrodipicolinate from L-aspartate: step 3/4. Catalyzes the condensation of (S)-aspartate-beta-semialdehyde [(S)-ASA] and pyruvate to 4-hydroxy-tetrahydrodipicolinate (HTPA). This chain is 4-hydroxy-tetrahydrodipicolinate synthase, found in Azobacteroides pseudotrichonymphae genomovar. CFP2.